The sequence spans 109 residues: Nucleoid-associated protein HD_0326 (109 aa).

This sequence belongs to the YbaB/EbfC family. As to quaternary structure, homodimer.

The protein resides in the cytoplasm. The protein localises to the nucleoid. Functionally, binds to DNA and alters its conformation. May be involved in regulation of gene expression, nucleoid organization and DNA protection. The chain is Nucleoid-associated protein HD_0326 from Haemophilus ducreyi (strain 35000HP / ATCC 700724).